The chain runs to 1123 residues: RNA-binding protein 6 (1123 aa).

Disordered regions lie at residues 1–391 (MWGD…EGGL) and 413–454 (LPGS…EEKP). Ser17 is subject to Phosphoserine. A Glycyl lysine isopeptide (Lys-Gly) (interchain with G-Cter in SUMO2) cross-link involves residue Lys36. The span at 79 to 97 (DGPHGDYRGGEGPGHDFRG) shows a compositional bias: basic and acidic residues. The segment covering 98-114 (GDFSSSDFQSRDSSQLD) has biased composition (low complexity). Composition is skewed to basic and acidic residues over residues 115–131 (FRGR…REGP) and 145–237 (YRGR…DFRG). Ser240 carries the phosphoserine modification. Composition is skewed to basic and acidic residues over residues 245 to 286 (LDFR…REMP) and 301 to 323 (QDRE…HTIE). Lys331 participates in a covalent cross-link: Glycyl lysine isopeptide (Lys-Gly) (interchain with G-Cter in SUMO2). Residues 332–354 (GEFEHSETREGETQGVAFEHESP) show a composition bias toward basic and acidic residues. At Thr344 the chain carries Phosphothreonine. Residues 356–365 (DFQNSQSPVQ) are compositionally biased toward polar residues. A phosphoserine mark is found at Ser360 and Ser362. Composition is skewed to basic and acidic residues over residues 366–391 (DQDK…EGGL) and 431–454 (KTAR…EEKP). Glycyl lysine isopeptide (Lys-Gly) (interchain with G-Cter in SUMO2) cross-links involve residues Lys386, Lys453, Lys469, and Lys569. The region spanning 456 to 536 (RLIRLSGVPE…KEVTLEYVSS (81 aa)) is the RRM domain. Disordered stretches follow at residues 574–654 (TYPQ…QDGE), 741–787 (KRRN…QSSS), and 827–948 (EEEI…EEDK). 2 stretches are compositionally biased toward basic and acidic residues: residues 597–654 (PADK…QDGE) and 742–754 (RRND…DHMH). Residues 772–787 (SDWSSDTNRQGQQSSS) show a composition bias toward polar residues. Residues 843–860 (SKKEMSKRDGKEKKDRGV) show a composition bias toward basic and acidic residues. Residues Lys871, Lys879, and Lys887 each participate in a glycyl lysine isopeptide (Lys-Gly) (interchain with G-Cter in SUMO2) cross-link. Ser891 is subject to Phosphoserine. Over residues 910 to 922 (GDSDYEEEEEEEQ) the composition is skewed to acidic residues. The segment covering 934–948 (QKREEQTKKENEEDK) has biased composition (basic and acidic residues). Residues Lys935, Lys948, Lys991, and Lys1019 each participate in a glycyl lysine isopeptide (Lys-Gly) (interchain with G-Cter in SUMO2) cross-link. A compositionally biased stretch (basic and acidic residues) spans 1004–1051 (EREGKFKGRGNDRREKLQSFDSPERKRIKYSRETDSDRKLVDKEDIDT). A disordered region spans residues 1004 to 1106 (EREGKFKGRG…RTSKRQSNET (103 aa)). Residues Ser1022 and Ser1025 each carry the phosphoserine modification. Residues Lys1042, Lys1046, and Lys1066 each participate in a glycyl lysine isopeptide (Lys-Gly) (interchain with G-Cter in SUMO2) cross-link. Residues 1051 to 1097 (TSSKGGCVQQATGWRKGTGLGYGHPGLASSEEAEGRMRGPSVGASGR) form the G-patch domain.

May interact with FAM168B. As to expression, ubiquitous in adults.

It is found in the nucleus. In terms of biological role, specifically binds poly(G) RNA homopolymers in vitro. The polypeptide is RNA-binding protein 6 (RBM6) (Homo sapiens (Human)).